Here is a 406-residue protein sequence, read N- to C-terminus: [Pyruvate dehydrogenase (acetyl-transferring)] kinase isozyme 3, mitochondrial (406 aa).

In terms of domain architecture, Histidine kinase spans 131–362 (IEYKEKFGFD…DAVIYLKALS (232 aa)). An ATP-binding site is contributed by 247 to 254 (ELFKNSMR). K278 bears the N6-succinyllysine mark. ATP is bound by residues D287, 306 to 307 (ST), and 323 to 328 (GFGYGL). Residues 383 to 406 (TPEADDWSNPSSEPRDASKYKAKQ) are disordered. The span at 395–406 (EPRDASKYKAKQ) shows a compositional bias: basic and acidic residues.

The protein belongs to the PDK/BCKDK protein kinase family. Homodimer. Interacts with the pyruvate dehydrogenase complex subunit DLAT, and is part of the multimeric pyruvate dehydrogenase complex that contains multiple copies of pyruvate dehydrogenase (E1), dihydrolipoamide acetyltransferase (DLAT, E2) and lipoamide dehydrogenase (DLD, E3). In terms of tissue distribution, expressed in heart, skeletal muscle, spinal cord, as well as fetal and adult brain.

It is found in the mitochondrion matrix. The enzyme catalyses L-seryl-[pyruvate dehydrogenase E1 alpha subunit] + ATP = O-phospho-L-seryl-[pyruvate dehydrogenase E1 alpha subunit] + ADP + H(+). With respect to regulation, activated by interaction with DLAT. Inhibited by AZD7545, dichloroacetate and radicicol. Inhibits pyruvate dehydrogenase activity by phosphorylation of the E1 subunit PDHA1, and thereby regulates glucose metabolism and aerobic respiration. Can also phosphorylate PDHA2. Decreases glucose utilization and increases fat metabolism in response to prolonged fasting, and as adaptation to a high-fat diet. Plays a role in glucose homeostasis and in maintaining normal blood glucose levels in function of nutrient levels and under starvation. Plays a role in the generation of reactive oxygen species. This is [Pyruvate dehydrogenase (acetyl-transferring)] kinase isozyme 3, mitochondrial (PDK3) from Homo sapiens (Human).